The sequence spans 67 residues: Conotoxin TsMMSK-011 (67 aa).

A signal peptide spans 1–20; it reads MMSKLGVLLTICLLLFPLTA. Residues 21-50 constitute a propeptide that is removed on maturation; that stretch reads VQLDGDQPADLPALRTQDISTDHSPWFDPV. 3 cysteine pairs are disulfide-bonded: Cys53-Cys65, Cys54-Cys61, and Cys58-Cys64. 4-hydroxyproline is present on Pro63.

This sequence belongs to the conotoxin M superfamily. Expressed by the venom duct.

Its subcellular location is the secreted. The polypeptide is Conotoxin TsMMSK-011 (Conus tessulatus (Tessellate cone)).